We begin with the raw amino-acid sequence, 37 residues long: Large ribosomal subunit protein bL36 (37 aa).

The protein belongs to the bacterial ribosomal protein bL36 family.

This Mycobacteroides abscessus (strain ATCC 19977 / DSM 44196 / CCUG 20993 / CIP 104536 / JCM 13569 / NCTC 13031 / TMC 1543 / L948) (Mycobacterium abscessus) protein is Large ribosomal subunit protein bL36.